Reading from the N-terminus, the 186-residue chain is dCTP deaminase (186 aa).

107 to 112 (KSTYAR) contributes to the dCTP binding site. Glu-133 acts as the Proton donor/acceptor in catalysis. DCTP contacts are provided by Gln-152, Tyr-166, and Gln-176.

The protein belongs to the dCTP deaminase family. In terms of assembly, homotrimer.

The catalysed reaction is dCTP + H2O + H(+) = dUTP + NH4(+). Its pathway is pyrimidine metabolism; dUMP biosynthesis; dUMP from dCTP (dUTP route): step 1/2. Functionally, catalyzes the deamination of dCTP to dUTP. The polypeptide is dCTP deaminase (Campylobacter concisus (strain 13826)).